Consider the following 79-residue polypeptide: Secretory calcium-binding phosphoprotein proline-glutamine rich 1 (79 aa).

An N-terminal signal peptide occupies residues Met-1–Ala-15.

The protein localises to the secreted. In terms of biological role, tooth-associated epithelia protein that may participate in structuring the basal lamina at cell-tooth interface. This Homo sapiens (Human) protein is Secretory calcium-binding phosphoprotein proline-glutamine rich 1.